Consider the following 293-residue polypeptide: HTH-type transcriptional regulator HdfR (293 aa).

Residues 1-58 form the HTH lysR-type domain; sequence MDTELLKTFLEVSRTRHFGRAAESLYLTQSAVSFRIRQLENQLGANLFTRHRNNIRLT. Residues 18-37 constitute a DNA-binding region (H-T-H motif); sequence FGRAAESLYLTQSAVSFRIR.

Belongs to the LysR transcriptional regulatory family.

Negatively regulates the transcription of the flagellar master operon flhDC by binding to the upstream region of the operon. This is HTH-type transcriptional regulator HdfR from Yersinia pseudotuberculosis serotype O:1b (strain IP 31758).